Consider the following 447-residue polypeptide: MNSSETTICALASGVCKGGIGVVRVSGPLCKVIAKKMLGFVPKPRYAHYGLFFDQENDEIDKGIALFFPKPHSFTGEDILEFQGHGGMSVMCCLLESVISMGAKPADPGEFSKRAFLNGKMNLVQAEAVADMINANSKRASKSAFRSLSGEFSNQVNALTKSIVELRVFVEATIDFSDEEIDFLQFEQVKLKAKGIKQAVETILKSATQGVILREGLNVVIAGKPNAGKSSLLNALTQESSAIVTDIAGTTRDVLKETICVNGMPLNIIDTAGLHDSDDKIEKEGIKRAHFEIERADVVLMVFDAQDDKPDFSILPKNIDDQPLLLIKNKVDLISGAVKKEMINNIVQLSISAKHSKGMELLRKELSDIAGLEDFSEGVVLSRKRHIIALEESLASIDNAIMQLENGVVELMAEDLRFAGQFMGSITGEFSSDDLLGEIFSSFCIGK.

(6S)-5-formyl-5,6,7,8-tetrahydrofolate is bound by residues R24, E81, and K120. One can recognise a TrmE-type G domain in the interval 216 to 371; that stretch reads GLNVVIAGKP…LRKELSDIAG (156 aa). K(+) is bound at residue N226. Residues 226–231, 245–251, and 270–273 each bind GTP; these read NAGKSS, TDIAGTT, and DTAG. Residue S230 coordinates Mg(2+). The K(+) site is built by T245, I247, and T250. T251 serves as a coordination point for Mg(2+). Residue K447 coordinates (6S)-5-formyl-5,6,7,8-tetrahydrofolate.

Belongs to the TRAFAC class TrmE-Era-EngA-EngB-Septin-like GTPase superfamily. TrmE GTPase family. As to quaternary structure, homodimer. Heterotetramer of two MnmE and two MnmG subunits. Requires K(+) as cofactor.

The protein resides in the cytoplasm. Functionally, exhibits a very high intrinsic GTPase hydrolysis rate. Involved in the addition of a carboxymethylaminomethyl (cmnm) group at the wobble position (U34) of certain tRNAs, forming tRNA-cmnm(5)s(2)U34. The sequence is that of tRNA modification GTPase MnmE from Ruthia magnifica subsp. Calyptogena magnifica.